The sequence spans 252 residues: 3-dehydroquinate dehydratase (252 aa).

3-dehydroquinate is bound by residues S21, E46–R48, and R82. H143 (proton donor/acceptor) is an active-site residue. K170 serves as the catalytic Schiff-base intermediate with substrate. The 3-dehydroquinate site is built by R213, S232, and Q236.

The protein belongs to the type-I 3-dehydroquinase family. As to quaternary structure, homodimer.

The enzyme catalyses 3-dehydroquinate = 3-dehydroshikimate + H2O. It functions in the pathway metabolic intermediate biosynthesis; chorismate biosynthesis; chorismate from D-erythrose 4-phosphate and phosphoenolpyruvate: step 3/7. Functionally, involved in the third step of the chorismate pathway, which leads to the biosynthesis of aromatic amino acids. Catalyzes the cis-dehydration of 3-dehydroquinate (DHQ) and introduces the first double bond of the aromatic ring to yield 3-dehydroshikimate. The sequence is that of 3-dehydroquinate dehydratase from Escherichia coli O127:H6 (strain E2348/69 / EPEC).